The chain runs to 263 residues: Elongation factor Ts (263 aa).

The interval 82–85 (TDFV) is involved in Mg(2+) ion dislocation from EF-Tu. A compositionally biased stretch (low complexity) spans 221 to 251 (APPAVVEAPVAETPEPAVAETPEAKPAATES). Residues 221-263 (APPAVVEAPVAETPEPAVAETPEAKPAATESKPAKSKSAKKKK) form a disordered region. Residues 254–263 (AKSKSAKKKK) show a composition bias toward basic residues.

The protein belongs to the EF-Ts family.

The protein localises to the cytoplasm. Functionally, associates with the EF-Tu.GDP complex and induces the exchange of GDP to GTP. It remains bound to the aminoacyl-tRNA.EF-Tu.GTP complex up to the GTP hydrolysis stage on the ribosome. The chain is Elongation factor Ts from Cyanothece sp. (strain PCC 7425 / ATCC 29141).